The chain runs to 123 residues: Small ribosomal subunit protein uS12 (123 aa).

Aspartate 89 is modified (3-methylthioaspartic acid). A disordered region spans residues 104 to 123 (TAGVKDRKQARSKYGAKRPK). A compositionally biased stretch (basic residues) spans 113 to 123 (ARSKYGAKRPK).

The protein belongs to the universal ribosomal protein uS12 family. In terms of assembly, part of the 30S ribosomal subunit. Contacts proteins S8 and S17. May interact with IF1 in the 30S initiation complex.

In terms of biological role, with S4 and S5 plays an important role in translational accuracy. Interacts with and stabilizes bases of the 16S rRNA that are involved in tRNA selection in the A site and with the mRNA backbone. Located at the interface of the 30S and 50S subunits, it traverses the body of the 30S subunit contacting proteins on the other side and probably holding the rRNA structure together. The combined cluster of proteins S8, S12 and S17 appears to hold together the shoulder and platform of the 30S subunit. This is Small ribosomal subunit protein uS12 from Neisseria gonorrhoeae (strain ATCC 700825 / FA 1090).